The following is a 433-amino-acid chain: 5-methylthioadenosine/S-adenosylhomocysteine deaminase (433 aa).

Positions 62 and 64 each coordinate Zn(2+). Residues glutamate 91, arginine 143, and histidine 183 each coordinate substrate. Histidine 210 is a Zn(2+) binding site. Residues glutamate 213 and aspartate 298 each contribute to the substrate site. Aspartate 298 lines the Zn(2+) pocket.

Belongs to the metallo-dependent hydrolases superfamily. MTA/SAH deaminase family. Zn(2+) serves as cofactor.

It catalyses the reaction S-adenosyl-L-homocysteine + H2O + H(+) = S-inosyl-L-homocysteine + NH4(+). The enzyme catalyses S-methyl-5'-thioadenosine + H2O + H(+) = S-methyl-5'-thioinosine + NH4(+). In terms of biological role, catalyzes the deamination of 5-methylthioadenosine and S-adenosyl-L-homocysteine into 5-methylthioinosine and S-inosyl-L-homocysteine, respectively. Is also able to deaminate adenosine. The chain is 5-methylthioadenosine/S-adenosylhomocysteine deaminase from Caldanaerobacter subterraneus subsp. tengcongensis (strain DSM 15242 / JCM 11007 / NBRC 100824 / MB4) (Thermoanaerobacter tengcongensis).